The following is a 341-amino-acid chain: Phenylalanine--tRNA ligase alpha subunit (341 aa).

E256 is a binding site for Mg(2+).

The protein belongs to the class-II aminoacyl-tRNA synthetase family. Phe-tRNA synthetase alpha subunit type 1 subfamily. As to quaternary structure, tetramer of two alpha and two beta subunits. The cofactor is Mg(2+).

It localises to the cytoplasm. It carries out the reaction tRNA(Phe) + L-phenylalanine + ATP = L-phenylalanyl-tRNA(Phe) + AMP + diphosphate + H(+). The sequence is that of Phenylalanine--tRNA ligase alpha subunit (pheS) from Chlamydia muridarum (strain MoPn / Nigg).